A 336-amino-acid chain; its full sequence is COP9 signalosome complex subunit 5 (336 aa).

The region spanning 44-181 (VRISSVAMIK…IGAFRTIPEG (138 aa)) is the MPN domain. 3 residues coordinate Zn(2+): histidine 127, histidine 129, and aspartate 140. The JAMM motif signature appears at 127–140 (HSHPGYGCWLSGID).

Belongs to the peptidase M67A family. CSN5 subfamily. Component of the COP9 signalosome (CSN) complex.

It is found in the cytoplasm. It localises to the nucleus. Its function is as follows. Catalytic component of the COP9 signalosome (CSN) complex that acts as an regulator of the ubiquitin (Ubl) conjugation pathway by mediating the deneddylation of the cullin subunit of SCF-type E3 ubiquitin-protein ligase complexes. The CSN complex is involved in the regulation of the circadian clock through its control of the stability of the SCF(FWD-1) complex. This is COP9 signalosome complex subunit 5 (csn-5) from Neurospora crassa (strain ATCC 24698 / 74-OR23-1A / CBS 708.71 / DSM 1257 / FGSC 987).